The primary structure comprises 286 residues: Versiconal hemiacetal acetate esterase stcI (286 aa).

Positions 54-56 match the Involved in the stabilization of the negatively charged intermediate by the formation of the oxyanion hole motif; that stretch reads HAG. Residues serine 123, aspartate 226, and histidine 256 contribute to the active site.

It belongs to the 'GDXG' lipolytic enzyme family.

It carries out the reaction (2S,3S)-versiconal hemiacetal acetate + H2O = (2S-3S)-versiconal hemiacetal + acetate + H(+). The catalysed reaction is (3S)-versiconol acetate + H2O = (S)-versiconol + acetate + H(+). Its pathway is mycotoxin biosynthesis; sterigmatocystin biosynthesis. Its function is as follows. Esterase; part of the gene cluster that mediates the biosynthesis of sterigmatocystin (ST), a polyketide-derived furanocoumarin which is part of the most toxic and carcinogenic compounds among the known mycotoxins. The first step in the biosynthesis of sterigmatocystin is the production of hexanoate by the fatty acid synthase (FAS) units stcJ and stcK. The polyketide backbone is assembled by the non-reducing polyketide synthase stcA by condensation of the starter hexanoyl-CoA and 7 malonyl-CoA extender units followed by cyclization and release of norsolorinic acid. Norsolorinic acid is the first stable intermediate in the biosynthesis of sterigmatocystin and is converted into averantin (AVN) by the ketoreductase stcE which reduces the hexanoate ketone to an alcohol. Averantin is then oxidized into 5'-hydroxyaverantin (HAVN) by the cytochrome P450 monooxygenase stcF. 5'-hydroxyaverantin is further converted to 5'-oxyaverantin (OAVN) by the 5'-hydroxyaverantin dehydrogenase stcG. The next step is the conversion of OAVN into averufin (AVF) which is catalyzed by a yet to be identified enzyme. The cytochrome P450 monooxygenase stcB and the flavin-binding monooxygenase stcW are both required for the conversion of averufin to 1-hydroxyversicolorone. The esterase stcI probably catalyzes the formation of versiconal hemiacetal acetate from 1-hydroxyversicolorone. The oxydoreductase stcN then probably catalyzes the biosynthetic step from versiconal to versicolorin B (VERB). The next step is performed by the versicolorin B desaturase stcL to produce versicolorin A (VERA). The ketoreductase stcU and the cytochrome P450 monooxygenase stcS are involved in the conversion of versicolorin A to demethylsterigmatocystin. The Baeyer-Villiger oxidas stcQ and the reductase stcR might be involved in the biosynthetic step from versicolorin A to demethylsterigmatocystin. The final step in the biosynthesis of sterigmatocystin is the methylation of demethylsterigmatocystin catalyzed by the methyltransferase stcP. This chain is Versiconal hemiacetal acetate esterase stcI, found in Emericella nidulans (strain FGSC A4 / ATCC 38163 / CBS 112.46 / NRRL 194 / M139) (Aspergillus nidulans).